Reading from the N-terminus, the 149-residue chain is Cell division protein SepF (149 aa).

Belongs to the SepF family. Homodimer. Interacts with FtsZ.

The protein localises to the cytoplasm. Its function is as follows. Cell division protein that is part of the divisome complex and is recruited early to the Z-ring. Probably stimulates Z-ring formation, perhaps through the cross-linking of FtsZ protofilaments. Its function overlaps with FtsA. This chain is Cell division protein SepF, found in Clostridium perfringens (strain ATCC 13124 / DSM 756 / JCM 1290 / NCIMB 6125 / NCTC 8237 / Type A).